Here is a 551-residue protein sequence, read N- to C-terminus: Cu(2+) suppressing and bleomycin sensitive protein 1 (551 aa).

Coiled-coil stretches lie at residues R174–D213 and N249–K300. The tract at residues E513–E551 is disordered. The span at E532 to D541 shows a compositional bias: low complexity. The span at S542–E551 shows a compositional bias: acidic residues.

It belongs to the CUB1 family. In terms of assembly, monomer. Phosphorylated by PKA in vitro.

It is found in the cytoplasm. The protein resides in the nucleus. Involved in bleomycin tolerance with links to DNA repair and/or proteasome function. The chain is Cu(2+) suppressing and bleomycin sensitive protein 1 (CUB1) from Saccharomyces cerevisiae (strain ATCC 204508 / S288c) (Baker's yeast).